The primary structure comprises 161 residues: SsrA-binding protein (161 aa).

It belongs to the SmpB family.

The protein resides in the cytoplasm. Required for rescue of stalled ribosomes mediated by trans-translation. Binds to transfer-messenger RNA (tmRNA), required for stable association of tmRNA with ribosomes. tmRNA and SmpB together mimic tRNA shape, replacing the anticodon stem-loop with SmpB. tmRNA is encoded by the ssrA gene; the 2 termini fold to resemble tRNA(Ala) and it encodes a 'tag peptide', a short internal open reading frame. During trans-translation Ala-aminoacylated tmRNA acts like a tRNA, entering the A-site of stalled ribosomes, displacing the stalled mRNA. The ribosome then switches to translate the ORF on the tmRNA; the nascent peptide is terminated with the 'tag peptide' encoded by the tmRNA and targeted for degradation. The ribosome is freed to recommence translation, which seems to be the essential function of trans-translation. The chain is SsrA-binding protein from Baumannia cicadellinicola subsp. Homalodisca coagulata.